The sequence spans 229 residues: Enolase-phosphatase E1 (229 aa).

The segment at 206–229 (DRDPASHHPQVQRFDDIHPEQIPA) is disordered. Basic and acidic residues predominate over residues 218-229 (RFDDIHPEQIPA).

The protein belongs to the HAD-like hydrolase superfamily. MasA/MtnC family. In terms of assembly, monomer. Mg(2+) serves as cofactor.

It catalyses the reaction 5-methylsulfanyl-2,3-dioxopentyl phosphate + H2O = 1,2-dihydroxy-5-(methylsulfanyl)pent-1-en-3-one + phosphate. It participates in amino-acid biosynthesis; L-methionine biosynthesis via salvage pathway; L-methionine from S-methyl-5-thio-alpha-D-ribose 1-phosphate: step 3/6. The protein operates within amino-acid biosynthesis; L-methionine biosynthesis via salvage pathway; L-methionine from S-methyl-5-thio-alpha-D-ribose 1-phosphate: step 4/6. Bifunctional enzyme that catalyzes the enolization of 2,3-diketo-5-methylthiopentyl-1-phosphate (DK-MTP-1-P) into the intermediate 2-hydroxy-3-keto-5-methylthiopentenyl-1-phosphate (HK-MTPenyl-1-P), which is then dephosphorylated to form the acireductone 1,2-dihydroxy-3-keto-5-methylthiopentene (DHK-MTPene). The sequence is that of Enolase-phosphatase E1 from Klebsiella oxytoca.